The primary structure comprises 279 residues: 3-methyl-2-oxobutanoate hydroxymethyltransferase (279 aa).

Residues D43 and D82 each coordinate Mg(2+). Residues 43–44, D82, and K112 contribute to the 3-methyl-2-oxobutanoate site; that span reads DS. A Mg(2+)-binding site is contributed by E114. Catalysis depends on E181, which acts as the Proton acceptor.

It belongs to the PanB family. In terms of assembly, homodecamer; pentamer of dimers. Mg(2+) serves as cofactor.

Its subcellular location is the cytoplasm. It carries out the reaction 3-methyl-2-oxobutanoate + (6R)-5,10-methylene-5,6,7,8-tetrahydrofolate + H2O = 2-dehydropantoate + (6S)-5,6,7,8-tetrahydrofolate. The protein operates within cofactor biosynthesis; (R)-pantothenate biosynthesis; (R)-pantoate from 3-methyl-2-oxobutanoate: step 1/2. Its function is as follows. Catalyzes the reversible reaction in which hydroxymethyl group from 5,10-methylenetetrahydrofolate is transferred onto alpha-ketoisovalerate to form ketopantoate. This Geobacillus thermodenitrificans (strain NG80-2) protein is 3-methyl-2-oxobutanoate hydroxymethyltransferase.